The sequence spans 247 residues: HTH-type transcriptional regulator SarU (247 aa).

DNA-binding regions (H-T-H motif) lie at residues 53 to 76 and 178 to 201; these read LKEI…SLSK and LKDL…RLNN.

The protein belongs to the SarA family.

It localises to the cytoplasm. Functionally, positive regulator of RNAII and RNAIII in a cell density-dependent manner. It can contribute to the expression of virulence genes controlled by agr. May also regulate target genes via an agr-independent pathway. This Staphylococcus aureus (strain COL) protein is HTH-type transcriptional regulator SarU (sarU).